Reading from the N-terminus, the 414-residue chain is MATQRASGLLQRLAQGSLVKQILVGLVLGILLAWISKPAAEAVGLLGTLFVGALKAVAPVLVLMLVMASIANHQHGQKTNIRPILFLYLLGTFSAALAAVVFSFAFPSTLHLSSSAQDIVPPSGIVEVLRGLLMSMVSNPIDALLNANYIGILVWAVGLGFALRHGNETTKNLVNDMSNAVTFMVKLVIRFAPIGIFGLVSSTLATTGFSTLWGYAHLLVVLIGCMLLVALVVNPLLVFWKIRRNPYPLVFACLRESGVYAFFTRSSAANIPVNMALCEKLNLDRDTYSVSIPLGATINMAGAAITITVLTLAAVHTLGVPVDLPTALLLSVVASLCACGASGVAGGSLLLIPLACNMFGIPNDIAMQVVAVGFIIGVLQDSCETALNSSTDVLFTAAACQAEDERLANNALRS.

8 helical membrane-spanning segments follow: residues Gly-16–Ser-36, Leu-46–Val-66, Ile-84–Phe-104, Ala-143–Leu-163, Ala-180–Val-200, Leu-219–Phe-239, Met-300–Val-320, and Val-332–Ile-352.

The protein belongs to the dicarboxylate/amino acid:cation symporter (DAACS) (TC 2.A.23) family.

Its subcellular location is the cell inner membrane. It carries out the reaction L-serine(in) + Na(+)(in) = L-serine(out) + Na(+)(out). It catalyses the reaction L-threonine(in) + Na(+)(in) = L-threonine(out) + Na(+)(out). Its function is as follows. Involved in the import of serine and threonine into the cell, with the concomitant import of sodium (symport system). The sequence is that of Serine/threonine transporter SstT from Salmonella agona (strain SL483).